The sequence spans 233 residues: Putative N-acetylmannosamine-6-phosphate 2-epimerase (233 aa).

The protein belongs to the NanE family.

It catalyses the reaction an N-acyl-D-glucosamine 6-phosphate = an N-acyl-D-mannosamine 6-phosphate. Its pathway is amino-sugar metabolism; N-acetylneuraminate degradation; D-fructose 6-phosphate from N-acetylneuraminate: step 3/5. In terms of biological role, converts N-acetylmannosamine-6-phosphate (ManNAc-6-P) to N-acetylglucosamine-6-phosphate (GlcNAc-6-P). The protein is Putative N-acetylmannosamine-6-phosphate 2-epimerase of Yersinia pseudotuberculosis serotype IB (strain PB1/+).